The sequence spans 207 residues: MRFNVSFLLSLLLPTLAFAESWSIRISEDEVSRTYGYHDTVESEHTMPLLESSPKSEKNTKVTYVNRDFTRQLNPSADEQDAKALGSSIEFEVFQINETKSSHTIFESGAGICQGFHSRLGVEVTDATTYYVIPVNKEEYYTNIATATVLSNEDSKNMQYVPVFYIQNPELAKKVQDEENKKGKNLASKNIENRKTILSHVICRKVI.

The first 19 residues, 1-19 (MRFNVSFLLSLLLPTLAFA), serve as a signal peptide directing secretion.

The protein to P.multocida PM1509.

This is an uncharacterized protein from Pasteurella multocida (strain Pm70).